The chain runs to 555 residues: DNA repair and recombination protein rhm52 (555 aa).

The DNA-binding element occupies 148–152; it reads KRALR. 2 disordered regions span residues 197–232 and 251–555; these read VVAEPRLPPVKPEPSNTASAAPHPPLPPLPEADSFD and HPDE…MKLN. The segment covering 260-276 has biased composition (low complexity); that stretch reads NSHASGSSGNTGASTTN. Composition is skewed to polar residues over residues 283 to 300 and 312 to 334; these read SGNQSNQQRPMQPSSRMN and TPNHQINRSGPQNGSINNQQNNH. Low complexity-rich tracts occupy residues 354–375 and 382–404; these read NNNNTSNGTGPHQRPLGNGPQQ and NGAATAPSGAEPVAFFSARAVAR. Residues 468–478 are compositionally biased toward polar residues; that stretch reads DNPSNNAGNGV. Low complexity predominate over residues 479 to 490; the sequence is QNQPQKPQPSQQ. Over residues 491–500 the composition is skewed to polar residues; the sequence is RGSILNPQFD. Over residues 536–547 the composition is skewed to low complexity; sequence PNGTSNGNGTPG.

It belongs to the RAD52 family. Part of a complex that includes RAD51, RAD52 and RAD59.

Its subcellular location is the nucleus. Its function is as follows. Involved in DNA double-strand break (DSB) repair and recombination. Promotes the annealing of complementary single-stranded DNA and by stimulation of the RAD51 recombinase. The polypeptide is DNA repair and recombination protein rhm52 (RHM52) (Pyricularia oryzae (strain 70-15 / ATCC MYA-4617 / FGSC 8958) (Rice blast fungus)).